Consider the following 232-residue polypeptide: Ribonuclease 3 (232 aa).

An RNase III domain is found at 10-135 (ALKIYEATGY…LIGAMYMDGG (126 aa)). E48 is a Mg(2+) binding site. D52 is a catalytic residue. Residues N121 and E124 each contribute to the Mg(2+) site. E124 is a catalytic residue. The DRBM domain maps to 161–230 (DPKTALQEWV…AKLMLKKITE (70 aa)).

It belongs to the ribonuclease III family. Homodimer. It depends on Mg(2+) as a cofactor.

The protein localises to the cytoplasm. The enzyme catalyses Endonucleolytic cleavage to 5'-phosphomonoester.. In terms of biological role, digests double-stranded RNA. Involved in the processing of primary rRNA transcript to yield the immediate precursors to the large and small rRNAs (23S and 16S). Processes some mRNAs, and tRNAs when they are encoded in the rRNA operon. Processes pre-crRNA and tracrRNA of type II CRISPR loci if present in the organism. In Anaplasma marginale (strain St. Maries), this protein is Ribonuclease 3.